The primary structure comprises 294 residues: MRFVIVTGLSGAGKTQATRTLEDLGYFCVDNLPPKLISKFAEVCTQSGGNIEKVALVIDIRGGIFFDDFFEALNYLKKNEFKYEILFLEATDEVLIKRFKETRRSHPLSPDGRVLTGITQEREKLREVKNIADIIIDTSKYEIRHLREKINKNYGDHTYPEKQLSITVLSFGFKYGIPVDSDLVFDVRFIPNPFYIPELKQYSGNDEPVKDYVLKQEETVNFIEKLVDMLRYLIPNYIKEGKSQLIISIGCTGGRHRSVAIANEVYERLNKENYNSKIEHRDVAEDLHKGEKKL.

8 to 15 (GLSGAGKT) contacts ATP. A GTP-binding site is contributed by 59 to 62 (DIRG).

It belongs to the RapZ-like family.

Displays ATPase and GTPase activities. This chain is Nucleotide-binding protein Cbei_4857, found in Clostridium beijerinckii (strain ATCC 51743 / NCIMB 8052) (Clostridium acetobutylicum).